The sequence spans 63 residues: Large ribosomal subunit protein eL37 (63 aa).

Zn(2+) contacts are provided by Cys-20, Cys-23, Cys-35, and Cys-38. Residues 20-38 (CRRCGRRAFNVKKGYCAAC) form a C4-type zinc finger.

Belongs to the eukaryotic ribosomal protein eL37 family. The cofactor is Zn(2+).

Binds to the 23S rRNA. The chain is Large ribosomal subunit protein eL37 from Thermococcus gammatolerans (strain DSM 15229 / JCM 11827 / EJ3).